The primary structure comprises 153 residues: TM2 domain-containing protein DDB_G0277895 (153 aa).

The TM2 domain maps to 3–50 (QKSVCVTYLLWLFFGLFGIHRFYLNRPCSGVLYLFTCGCFFIGWFIDI). A run of 2 helical transmembrane segments spans residues 6–26 (VCVT…RFYL) and 33–53 (VLYL…ICLI). The disordered stretch occupies residues 85–153 (GSPQQQPYGA…GNYPPPYGPQ (69 aa)). A run of 6 repeats spans residues 89–96 (QQPYGAPP), 97–104 (QQPYGAPP), 105–112 (QQPYGAPP), 113–120 (QQPYGAPP), 121–128 (QQPYGAPP), and 129–136 (PQPYGAPP). Residues 89 to 136 (QQPYGAPPQQPYGAPPQQPYGAPPQQPYGAPPQQPYGAPPPQPYGAPP) form a 6 X 8 AA tandem repeat of Q-Q-P-Y-G-A-P-P region. Positions 93-153 (GAPPQQPYGA…GNYPPPYGPQ (61 aa)) are enriched in pro residues.

The protein belongs to the TM2 family.

Its subcellular location is the membrane. The sequence is that of TM2 domain-containing protein DDB_G0277895 from Dictyostelium discoideum (Social amoeba).